A 1669-amino-acid polypeptide reads, in one-letter code: Collagen alpha-1(IV) chain (1669 aa).

A signal peptide spans 1–27 (MGPRLSVWLLLLFAALLLHEERSRAAA). A propeptide spans 28–172 (KGDCGGSGCG…LGHVPGTLLK (145 aa)) (N-terminal propeptide (7S domain)). The segment at 47–1443 (QKGERGLPGL…MGPPGTPSVD (1397 aa)) is disordered. Residues 92 to 104 (TRGPPGAAGYPGN) are compositionally biased toward low complexity. N-linked (GlcNAc...) asparagine glycosylation occurs at Asn-126. The tract at residues 173–1440 (GERGFPGIPG…PGSMGPPGTP (1268 aa)) is triple-helical region. Residues 196–214 (VGPPGFTGPPGPPGPPGPP) show a composition bias toward pro residues. 3 positions are modified to 3-hydroxyproline: Pro-204, Pro-207, and Pro-210. Positions 234–247 (QGVSGPPGVPGQAQ) are enriched in low complexity. The span at 289–298 (PGKDGEKGER) shows a compositional bias: basic and acidic residues. Residues 367–376 (PGQPGPPGFP) are compositionally biased toward pro residues. The span at 377 to 387 (TPGQAGAPGFP) shows a compositional bias: low complexity. Composition is skewed to pro residues over residues 413 to 424 (PGPPGPPGPPGQ) and 436 to 448 (PGPP…PGTP). Over residues 485 to 494 (PGEIGFPGQP) the composition is skewed to low complexity. Composition is skewed to basic and acidic residues over residues 497 to 508 (KGDRGLPGRDGL) and 535 to 545 (FDMRLKGDKGD). The segment covering 586–595 (GPPGGVGFPG) has biased composition (gly residues). Pro-587 and Pro-602 each carry 3-hydroxyproline. Position 603 is a 4-hydroxyproline (Pro-603). A 3-hydroxyproline modification is found at Pro-605. 4-hydroxyproline is present on Pro-606. Low complexity predominate over residues 611 to 620 (IGPVGEKGQA). Residues 621–630 (GFPGGPGSPG) show a composition bias toward gly residues. 4-hydroxyproline occurs at positions 623, 626, 629, and 632. Pro-647 bears the 3-hydroxyproline mark. The segment covering 715-731 (RPGFNGLPGNPGPQGQK) has biased composition (low complexity). A compositionally biased stretch (gly residues) spans 758–767 (GSIGGPGVPG). A compositionally biased stretch (pro residues) spans 784–802 (PGPPGVQGPAGPPGVPGIG). Positions 803-817 (PPGAMGPPGGQGPPG) are enriched in gly residues. Low complexity-rich tracts occupy residues 847-875 (SQGL…PGFP) and 994-1003 (DPGLSGTPGS). Gly residues predominate over residues 1011 to 1020 (GSVGGMGLPG). Pro-1214 carries the 3-hydroxyproline modification. Residues 1220–1230 (QPGLPGTPGHP) show a composition bias toward low complexity. Over residues 1247 to 1258 (PGHPGPMGPPGF) the composition is skewed to pro residues. The span at 1290–1299 (GMPGIGGSPG) shows a compositional bias: gly residues. Low complexity-rich tracts occupy residues 1333 to 1343 (DQGVPGPKGLQ), 1368 to 1391 (PGLK…SVGL), and 1398 to 1412 (PGFD…ETGP). Residues 1413–1428 (FGPPGPRGFPGPPGPD) show a composition bias toward pro residues. Pro-1424 is modified (3-hydroxyproline). Positions 1445-1669 (GFLVTRHSQT…SRCQVCMRRT (225 aa)) constitute a Collagen IV NC1 domain. Cystine bridges form between Cys-1460/Cys-1551, Cys-1493/Cys-1548, Cys-1505/Cys-1511, Cys-1570/Cys-1665, Cys-1604/Cys-1662, and Cys-1616/Cys-1622. Met-1533 participates in a covalent cross-link: S-Lysyl-methionine sulfilimine (Met-Lys) (interchain with K-1651). Residue Lys-1651 forms an S-Lysyl-methionine sulfilimine (Lys-Met) (interchain with M-1533) linkage.

The protein belongs to the type IV collagen family. There are six type IV collagen isoforms, alpha 1(IV)-alpha 6(IV), each of which can form a triple helix structure with 2 other chains to generate type IV collagen network. Interacts with EFEMP2. In terms of processing, lysines at the third position of the tripeptide repeating unit (G-X-Y) are hydroxylated. The modified lysines can be O-glycosylated. Post-translationally, contains 4-hydroxyproline. Prolines at the third position of the tripeptide repeating unit (G-X-Y) are hydroxylated in some or all of the chains. Contains 3-hydroxyproline. This modification occurs on the first proline residue in the sequence motif Gly-Pro-Hyp, where Hyp is 4-hydroxyproline. In terms of processing, type IV collagens contain numerous cysteine residues which are involved in inter- and intramolecular disulfide bonding. 12 of these, located in the NC1 domain, are conserved in all known type IV collagens. Post-translationally, the trimeric structure of the NC1 domains is stabilized by covalent bonds (sulfilimine cross-links) between Lys and Met residues. These cross-links are important for the mechanical stability of the basement membrane. Sulfilimine cross-link is catalyzed by PXDN. Proteolytic processing produces the C-terminal NC1 peptide, arresten. In terms of tissue distribution, detected in the basement membrane of the cornea (at protein level).

The protein localises to the secreted. The protein resides in the extracellular space. It is found in the extracellular matrix. Its subcellular location is the basement membrane. In terms of biological role, type IV collagen is the major structural component of glomerular basement membranes (GBM), forming a 'chicken-wire' meshwork together with laminins, proteoglycans and entactin/nidogen. Its function is as follows. Arresten, comprising the C-terminal NC1 domain, inhibits angiogenesis and tumor formation. The C-terminal half is found to possess the anti-angiogenic activity. Specifically inhibits endothelial cell proliferation, migration and tube formation. This Mus musculus (Mouse) protein is Collagen alpha-1(IV) chain.